The chain runs to 444 residues: Phosphoglucosamine mutase (444 aa).

Ser-101 acts as the Phosphoserine intermediate in catalysis. Mg(2+) contacts are provided by Ser-101, Asp-239, Asp-241, and Asp-243. Ser-101 bears the Phosphoserine mark.

This sequence belongs to the phosphohexose mutase family. It depends on Mg(2+) as a cofactor. Activated by phosphorylation.

The catalysed reaction is alpha-D-glucosamine 1-phosphate = D-glucosamine 6-phosphate. In terms of biological role, catalyzes the conversion of glucosamine-6-phosphate to glucosamine-1-phosphate. The polypeptide is Phosphoglucosamine mutase (Alcanivorax borkumensis (strain ATCC 700651 / DSM 11573 / NCIMB 13689 / SK2)).